A 434-amino-acid chain; its full sequence is UDP-N-acetylglucosamine 1-carboxyvinyltransferase 1 (434 aa).

22-23 (KN) contacts phosphoenolpyruvate. Arginine 93 is a binding site for UDP-N-acetyl-alpha-D-glucosamine. Cysteine 117 serves as the catalytic Proton donor. At cysteine 117 the chain carries 2-(S-cysteinyl)pyruvic acid O-phosphothioketal. Residues 122 to 126 (RPIDQ), aspartate 306, and valine 328 each bind UDP-N-acetyl-alpha-D-glucosamine.

Belongs to the EPSP synthase family. MurA subfamily.

It localises to the cytoplasm. It carries out the reaction phosphoenolpyruvate + UDP-N-acetyl-alpha-D-glucosamine = UDP-N-acetyl-3-O-(1-carboxyvinyl)-alpha-D-glucosamine + phosphate. Its pathway is cell wall biogenesis; peptidoglycan biosynthesis. In terms of biological role, cell wall formation. Adds enolpyruvyl to UDP-N-acetylglucosamine. The polypeptide is UDP-N-acetylglucosamine 1-carboxyvinyltransferase 1 (Bacillus cereus (strain ATCC 14579 / DSM 31 / CCUG 7414 / JCM 2152 / NBRC 15305 / NCIMB 9373 / NCTC 2599 / NRRL B-3711)).